The sequence spans 374 residues: P2Y purinoceptor 2 (374 aa).

Topologically, residues 1–32 are extracellular; the sequence is MAAGLDSWNSTINGTWEGDELGYKCRFNEDFK. Asparagine 9 and asparagine 13 each carry an N-linked (GlcNAc...) asparagine glycan. A helical transmembrane segment spans residues 33–59; sequence YVLLPVSYGVVCVLGLCLNVVALYIFL. At 60-70 the chain is on the cytoplasmic side; sequence CRLKTWNASTT. Residues 71–93 form a helical membrane-spanning segment; it reads YMFHLAVSDSLYAASLPLLVYYY. Over 94 to 110 the chain is Extracellular; sequence AQGDHWPFSTVLCKLVR. A disulfide bridge connects residues cysteine 106 and cysteine 183. The chain crosses the membrane as a helical span at residues 111–129; the sequence is FLFYTNLYCSILFLTCISV. At 130-152 the chain is on the cytoplasmic side; the sequence is HRCLGVLRPLHSLSWGHARYARR. Residues 153–172 form a helical membrane-spanning segment; the sequence is VAAVVWVLVLACQAPVLYFV. Residues 173–194 are Extracellular-facing; the sequence is TTSVRGTRITCHDTSARELFSH. Residues 195 to 220 traverse the membrane as a helical segment; it reads FVAYSSVMLGLLFAVPFSIILVCYVL. The Cytoplasmic portion of the chain corresponds to 221-245; that stretch reads MARRLLKPAYGTTGLPRAKRKSVRT. A helical transmembrane segment spans residues 246–268; that stretch reads IALVLAVFALCFLPFHVTRTLYY. Residues 269-286 are Extracellular-facing; the sequence is SFRSLDLSCHTLNAINMA. The helical transmembrane segment at 287-308 threads the bilayer; sequence YKITRPLASANSCLDPVLYFLA. Topologically, residues 309 to 374 are cytoplasmic; it reads GQRLVRFARD…AGSETKDIRL (66 aa). The disordered stretch occupies residues 318 to 374; the sequence is DAKPATEPTPSPQARRKLGLHRPNRTDTVRKDLSISSDDSRRTESTPAGSETKDIRL. The span at 331 to 340 shows a compositional bias: basic residues; the sequence is ARRKLGLHRP. Positions 341-361 are enriched in basic and acidic residues; the sequence is NRTDTVRKDLSISSDDSRRTE.

It belongs to the G-protein coupled receptor 1 family.

The protein localises to the cell membrane. Functionally, receptor for ATP and UTP coupled to G-proteins that activate a phosphatidylinositol-calcium second messenger system. The affinity range is UTP = ATP &gt; ATP-gamma-S &gt;&gt; 2-methylthio-ATP = ADP. This chain is P2Y purinoceptor 2 (P2ry2), found in Rattus norvegicus (Rat).